A 190-amino-acid polypeptide reads, in one-letter code: Bifunctional protein PyrR (190 aa).

Residues 107–119 carry the PRPP-binding motif; sequence IILVDDVLYSGRT.

The protein belongs to the purine/pyrimidine phosphoribosyltransferase family. PyrR subfamily.

It carries out the reaction UMP + diphosphate = 5-phospho-alpha-D-ribose 1-diphosphate + uracil. In terms of biological role, regulates the transcription of the pyrimidine nucleotide (pyr) operon in response to exogenous pyrimidines. Its function is as follows. Also displays a weak uracil phosphoribosyltransferase activity which is not physiologically significant. This is Bifunctional protein PyrR from Corynebacterium diphtheriae (strain ATCC 700971 / NCTC 13129 / Biotype gravis).